The chain runs to 609 residues: Glutamine--fructose-6-phosphate aminotransferase [isomerizing] (609 aa).

The Nucleophile; for GATase activity role is filled by C2. The 216-residue stretch at 2 to 217 (CGIVGAIAGR…EGDTAELRRD (216 aa)) folds into the Glutamine amidotransferase type-2 domain. SIS domains lie at 284–425 (TADA…LQGR) and 458–599 (WAER…VDKP). K604 functions as the For Fru-6P isomerization activity in the catalytic mechanism.

As to quaternary structure, homodimer.

The protein resides in the cytoplasm. The enzyme catalyses D-fructose 6-phosphate + L-glutamine = D-glucosamine 6-phosphate + L-glutamate. Catalyzes the first step in hexosamine metabolism, converting fructose-6P into glucosamine-6P using glutamine as a nitrogen source. This chain is Glutamine--fructose-6-phosphate aminotransferase [isomerizing], found in Xanthomonas campestris pv. campestris (strain ATCC 33913 / DSM 3586 / NCPPB 528 / LMG 568 / P 25).